Consider the following 154-residue polypeptide: Methylglyoxal synthase (154 aa).

The MGS-like domain maps to 1–154; the sequence is MELTTRTIAA…RYMQQRLDLK (154 aa). Residues His-19, Lys-23, 45-48, and 65-66 each bind substrate; these read TGTT and SG. Catalysis depends on Asp-71, which acts as the Proton donor/acceptor. His-98 serves as a coordination point for substrate.

It belongs to the methylglyoxal synthase family.

The catalysed reaction is dihydroxyacetone phosphate = methylglyoxal + phosphate. Functionally, catalyzes the formation of methylglyoxal from dihydroxyacetone phosphate. In Yersinia pseudotuberculosis serotype O:1b (strain IP 31758), this protein is Methylglyoxal synthase.